Here is a 128-residue protein sequence, read N- to C-terminus: Large ribosomal subunit protein bL17 (128 aa).

This sequence belongs to the bacterial ribosomal protein bL17 family. Part of the 50S ribosomal subunit. Contacts protein L32.

The sequence is that of Large ribosomal subunit protein bL17 from Streptococcus equi subsp. equi (strain 4047).